We begin with the raw amino-acid sequence, 255 residues long: Ditrans,polycis-undecaprenyl-diphosphate synthase ((2E,6E)-farnesyl-diphosphate specific) (255 aa).

Residue D21 is part of the active site. D21 lines the Mg(2+) pocket. Substrate-binding positions include 22–25 (GNGR), W26, R34, H38, and 66–68 (SSE). N69 functions as the Proton acceptor in the catalytic mechanism. Substrate-binding positions include W70, R72, R189, and 195–197 (RIS). E208 is a Mg(2+) binding site.

This sequence belongs to the UPP synthase family. As to quaternary structure, homodimer. Mg(2+) is required as a cofactor.

It catalyses the reaction 8 isopentenyl diphosphate + (2E,6E)-farnesyl diphosphate = di-trans,octa-cis-undecaprenyl diphosphate + 8 diphosphate. Functionally, catalyzes the sequential condensation of isopentenyl diphosphate (IPP) with (2E,6E)-farnesyl diphosphate (E,E-FPP) to yield (2Z,6Z,10Z,14Z,18Z,22Z,26Z,30Z,34E,38E)-undecaprenyl diphosphate (di-trans,octa-cis-UPP). UPP is the precursor of glycosyl carrier lipid in the biosynthesis of bacterial cell wall polysaccharide components such as peptidoglycan and lipopolysaccharide. This Xylella fastidiosa (strain Temecula1 / ATCC 700964) protein is Ditrans,polycis-undecaprenyl-diphosphate synthase ((2E,6E)-farnesyl-diphosphate specific).